Here is a 168-residue protein sequence, read N- to C-terminus: MVKDILAPGLRVVFCGINPGLSSANTGFPFAHPANRFWKVIHLAGFTDRQLKPEEAEKLLDFRCGVTKLVDRPTVQATEVKLHELRSGGRNLIEKIEDYQPAALAVLGKQAFEQGFSQRGIAWGKKKIAIGATMVWVLPNPSGLNRIKTEKLVEAYRELDQALIMRGL.

The protein belongs to the uracil-DNA glycosylase (UDG) superfamily. TDG/mug family. In terms of assembly, binds DNA as a monomer.

Its subcellular location is the cytoplasm. The enzyme catalyses Specifically hydrolyzes mismatched double-stranded DNA and polynucleotides, releasing free uracil.. Functionally, excises ethenocytosine and uracil, which can arise by alkylation or deamination of cytosine, respectively, from the corresponding mispairs with guanine in ds-DNA. It is capable of hydrolyzing the carbon-nitrogen bond between the sugar-phosphate backbone of the DNA and the mispaired base. The complementary strand guanine functions in substrate recognition. Required for DNA damage lesion repair in stationary-phase cells. In Salmonella gallinarum (strain 287/91 / NCTC 13346), this protein is G/U mismatch-specific DNA glycosylase.